Consider the following 389-residue polypeptide: 11-beta-hydroxysteroid dehydrogenase-like 5 (389 aa).

Residues 11–31 form a helical; Signal-anchor for type II membrane protein membrane-spanning segment; it reads LVAPPATMVVMAFAWPLLSFI. Residues 56–82 and Asp107 each bind NADP(+); that span reads GASS…VARR. Residue Ser186 coordinates substrate. The Proton acceptor role is filled by Tyr199. NADP(+) is bound by residues 199-203 and Lys203; that span reads YSAAK. The disordered stretch occupies residues 337–381; the sequence is LMLEGGPPRVPASPPRYTASPPHYTASPPRYPASPPRYPASPPRF. A compositionally biased stretch (pro residues) spans 365–378; the sequence is PRYPASPPRYPASP.

The protein belongs to the short-chain dehydrogenases/reductases (SDR) family.

It is found in the membrane. This Arabidopsis thaliana (Mouse-ear cress) protein is 11-beta-hydroxysteroid dehydrogenase-like 5 (HSD5).